Here is a 380-residue protein sequence, read N- to C-terminus: Cytochrome b (380 aa).

A run of 4 helical transmembrane segments spans residues 34–54 (FGSL…LLAM), 78–99 (WLIR…YMHI), 114–134 (WNTG…GYVL), and 179–199 (FFAL…IHLT). Heme b contacts are provided by H84 and H98. The heme b site is built by H183 and H197. Residue H202 coordinates a ubiquinone. 4 consecutive transmembrane segments (helical) span residues 227–247 (SKDI…ALFS), 289–309 (LGGV…PFLH), 321–341 (LSQM…WIGS), and 348–368 (FIII…ILLP).

This sequence belongs to the cytochrome b family. As to quaternary structure, the cytochrome bc1 complex contains 11 subunits: 3 respiratory subunits (MT-CYB, CYC1 and UQCRFS1), 2 core proteins (UQCRC1 and UQCRC2) and 6 low-molecular weight proteins (UQCRH/QCR6, UQCRB/QCR7, UQCRQ/QCR8, UQCR10/QCR9, UQCR11/QCR10 and a cleavage product of UQCRFS1). This cytochrome bc1 complex then forms a dimer. The cofactor is heme b.

It is found in the mitochondrion inner membrane. Functionally, component of the ubiquinol-cytochrome c reductase complex (complex III or cytochrome b-c1 complex) that is part of the mitochondrial respiratory chain. The b-c1 complex mediates electron transfer from ubiquinol to cytochrome c. Contributes to the generation of a proton gradient across the mitochondrial membrane that is then used for ATP synthesis. The polypeptide is Cytochrome b (MT-CYB) (Caracara plancus (Southern caracara)).